A 247-amino-acid chain; its full sequence is tRNA pseudouridine synthase A (247 aa).

The active-site Nucleophile is the aspartate 53. Tyrosine 111 provides a ligand contact to substrate.

The protein belongs to the tRNA pseudouridine synthase TruA family. Homodimer.

It catalyses the reaction uridine(38/39/40) in tRNA = pseudouridine(38/39/40) in tRNA. In terms of biological role, formation of pseudouridine at positions 38, 39 and 40 in the anticodon stem and loop of transfer RNAs. The chain is tRNA pseudouridine synthase A from Bacillus subtilis (strain 168).